The primary structure comprises 289 residues: uncharacterized protein (289 aa).

The signal sequence occupies residues 1–19; that stretch reads MAKWLGAPLARGVSTATRA. The next 2 helical transmembrane spans lie at 90-110 and 257-277; these read GLLA…GWGV and AALS…LVFA.

The protein resides in the cell membrane. This is an uncharacterized protein from Mycobacterium tuberculosis (strain CDC 1551 / Oshkosh).